The chain runs to 526 residues: Cholesterol side-chain cleavage enzyme, mitochondrial (526 aa).

Residues 1-36 (MLAKGLSLRSVLVKGCQPFLSPTWQGPVLSTGKGAG) constitute a mitochondrion transit peptide. Residues 30–41 (STGKGAGTSTSS) show a composition bias toward low complexity. The disordered stretch occupies residues 30–49 (STGKGAGTSTSSPRSFNEIP). Residue Cys458 participates in heme binding.

This sequence belongs to the cytochrome P450 family. Interacts with FDX1/adrenodoxin. Requires heme as cofactor.

It is found in the mitochondrion inner membrane. It catalyses the reaction 6 reduced [adrenodoxin] + cholesterol + 3 O2 + 6 H(+) = 4-methylpentanal + pregnenolone + 6 oxidized [adrenodoxin] + 4 H2O. The catalysed reaction is 2 reduced [adrenodoxin] + cholesterol + O2 + 2 H(+) = (22R)-hydroxycholesterol + 2 oxidized [adrenodoxin] + H2O. The enzyme catalyses (22R)-hydroxycholesterol + 2 reduced [adrenodoxin] + O2 + 2 H(+) = (20R,22R)-20,22-dihydroxycholesterol + 2 oxidized [adrenodoxin] + H2O. It carries out the reaction (20R,22R)-20,22-dihydroxycholesterol + 2 reduced [adrenodoxin] + O2 + 2 H(+) = 4-methylpentanal + pregnenolone + 2 oxidized [adrenodoxin] + 2 H2O. Its pathway is lipid metabolism; C21-steroid hormone metabolism. The protein operates within steroid metabolism; cholesterol metabolism. In terms of biological role, a cytochrome P450 monooxygenase that catalyzes the side-chain hydroxylation and cleavage of cholesterol to pregnenolone, the precursor of most steroid hormones. Catalyzes three sequential oxidation reactions of cholesterol, namely the hydroxylation at C22 followed with the hydroxylation at C20 to yield 20R,22R-hydroxycholesterol that is further cleaved between C20 and C22 to yield the C21-steroid pregnenolone and 4-methylpentanal. Mechanistically, uses molecular oxygen inserting one oxygen atom into a substrate and reducing the second into a water molecule. Two electrons are provided by NADPH via a two-protein mitochondrial transfer system comprising flavoprotein FDXR (adrenodoxin/ferredoxin reductase) and nonheme iron-sulfur protein FDX1 or FDX2 (adrenodoxin/ferredoxin). This chain is Cholesterol side-chain cleavage enzyme, mitochondrial, found in Mus musculus (Mouse).